The chain runs to 459 residues: mRNA-capping enzyme subunit alpha (459 aa).

Lys70 (N6-GMP-lysine intermediate) is an active-site residue. A disordered region spans residues 415 to 459 (MAGGSGRPLPSQSQNATLSTSKPVHSQPPSNDKEPKYVDEDDWSD). The segment covering 424-444 (PSQSQNATLSTSKPVHSQPPS) has biased composition (polar residues).

It belongs to the eukaryotic GTase family. Heterodimer. The mRNA-capping enzyme is composed of two separate chains alpha and beta, respectively a mRNA guanylyltransferase and an mRNA 5'-triphosphate monophosphatase.

The protein resides in the nucleus. It catalyses the reaction a 5'-end diphospho-ribonucleoside in mRNA + GTP + H(+) = a 5'-end (5'-triphosphoguanosine)-ribonucleoside in mRNA + diphosphate. Functionally, second step of mRNA capping. Transfer of the GMP moiety of GTP to the 5'-diphosphate terminus of RNA via a covalent enzyme-GMP reaction intermediate. The chain is mRNA-capping enzyme subunit alpha (CEG1) from Saccharomyces cerevisiae (strain ATCC 204508 / S288c) (Baker's yeast).